A 555-amino-acid polypeptide reads, in one-letter code: Synaptotagmin-14 (555 aa).

The Extracellular segment spans residues 1 to 24; the sequence is MAIEGGERTCGVHELICIRKVSPE. Residues 25 to 47 traverse the membrane as a helical; Signal-anchor for type III membrane protein segment; that stretch reads AVGFLSAVGVFIVLMLLLFLYIN. The Cytoplasmic portion of the chain corresponds to 48–555; that stretch reads KKFCFENVGG…VCRWHALLES (508 aa). 3 disordered regions span residues 76–97, 157–179, and 205–258; these read YNSY…EALG, TPPL…HLSC, and CPSE…PEPE. A compositionally biased stretch (basic and acidic residues) spans 211–224; the sequence is TGHEAESYHNKGYE. C2 domains lie at 260–379 and 415–550; these read KYGT…SLPV and SVPE…CRWH.

This sequence belongs to the synaptotagmin family. Homodimer. Can also form heterodimers. As to expression, expressed in heart and testis. Expressed in brain (especially in the cerebellum).

Its subcellular location is the membrane. Its function is as follows. May be involved in the trafficking and exocytosis of secretory vesicles in non-neuronal tissues. Is Ca(2+)-independent. In Mus musculus (Mouse), this protein is Synaptotagmin-14 (Syt14).